Consider the following 385-residue polypeptide: NADH-quinone oxidoreductase subunit D 2 (385 aa).

This sequence belongs to the complex I 49 kDa subunit family. In terms of assembly, NDH-1 is composed of 14 different subunits. Subunits NuoB, C, D, E, F, and G constitute the peripheral sector of the complex.

Its subcellular location is the cell membrane. The enzyme catalyses a quinone + NADH + 5 H(+)(in) = a quinol + NAD(+) + 4 H(+)(out). Functionally, NDH-1 shuttles electrons from NADH, via FMN and iron-sulfur (Fe-S) centers, to quinones in the respiratory chain. The immediate electron acceptor for the enzyme in this species is believed to be a menaquinone. Couples the redox reaction to proton translocation (for every two electrons transferred, four hydrogen ions are translocated across the cytoplasmic membrane), and thus conserves the redox energy in a proton gradient. The protein is NADH-quinone oxidoreductase subunit D 2 of Salinispora arenicola (strain CNS-205).